Reading from the N-terminus, the 145-residue chain is DNA polymerase epsilon subunit 3 (145 aa).

At alanine 2 the chain carries N-acetylalanine. At threonine 83 the chain carries Phosphothreonine. A coiled-coil region spans residues 85–144 (LKEALEAYRREQKGKKEASEQKKKDKDKKDCEEQDKSREEEDEDEERLDEEEQNEEEEVD). Residues 93-123 (RREQKGKKEASEQKKKDKDKKDCEEQDKSRE) are compositionally biased toward basic and acidic residues. Residues 93–145 (RREQKGKKEASEQKKKDKDKKDCEEQDKSREEEDEDEERLDEEEQNEEEEVDN) are disordered. At serine 121 the chain carries Phosphoserine. Acidic residues predominate over residues 124–145 (EEDEDEERLDEEEQNEEEEVDN).

In terms of assembly, component of the DNA polymerase epsilon complex consisting of four subunits: the catalytic subunit POLE and the accessory subunits POLE2, POLE3 and POLE4. Interaction with POLE4 is a prerequisite for further binding with POLE and POLE2. Heterodimer with CHRAC1; binds to DNA. Component of the CHRAC ISWI chromatin remodeling complex at least composed of SMARCA5/SNF2H, BAZ1A/ACF1, CHRAC1 and POLE3; the complex preferentially binds DNA through the CHRAC1-POLE3 heterodimer and possesses ATP-dependent nucleosome-remodeling activity. Within the complex, the heterodimer with CHRAC1 interacts with SMARCA5/SNF2H; the interaction is direct and enhances nucleosome sliding activity by the SMARCA5/SNF2H and BAZ1A/ACF1 interaction. Within the complex, the heterodimer with CHRAC1 interacts with BAZ1A/ACF1; the interactions are direct.

The protein resides in the nucleus. In terms of biological role, accessory component of the DNA polymerase epsilon complex. Participates in DNA repair and in chromosomal DNA replication. Forms a complex with CHRAC1 and binds naked DNA, which is then incorporated into chromatin, aided by the nucleosome-remodeling activity of ISWI/SNF2H and ACF1. Does not enhance nucleosome sliding activity of the ACF-5 ISWI chromatin remodeling complex. This chain is DNA polymerase epsilon subunit 3 (Pole3), found in Rattus norvegicus (Rat).